We begin with the raw amino-acid sequence, 173 residues long: Pyrimidine operon regulatory protein (173 aa).

Substrate contacts are provided by residues 40-41 (TR), 97-105 (DDVLYTGRT), and R130. The PRPP-binding signature appears at 93–105 (VILVDDVLYTGRT).

It belongs to the purine/pyrimidine phosphoribosyltransferase family. PyrR subfamily.

In terms of biological role, regulates transcriptional attenuation of the pyrimidine nucleotide (pyr) operon in response to exogenous pyrimidines, probably by binding to specific sites on pyr mRNA. This probably disrupts an antiterminator hairpin in the RNA and favors formation of a downstream transcription terminator, leading to a reduced expression of downstream genes. This chain is Pyrimidine operon regulatory protein, found in Lactococcus lactis subsp. lactis (strain IL1403) (Streptococcus lactis).